The following is a 278-amino-acid chain: Potassium/proton antiporter CemA (278 aa).

4 helical membrane passes run 61 to 81, 155 to 175, 203 to 223, and 238 to 258; these read IFLLLISPVLVNQASKFFDFG, AVKNILSDILSIAVFILLMIT, IILFTDMFVGFHSPHGWEVII, and FIFLFISTFPVILDTIFKYWI.

This sequence belongs to the CemA family.

It localises to the plastid. Its subcellular location is the chloroplast inner membrane. It carries out the reaction K(+)(in) + H(+)(out) = K(+)(out) + H(+)(in). In terms of biological role, contributes to K(+)/H(+) antiport activity by supporting proton efflux to control proton extrusion and homeostasis in chloroplasts in a light-dependent manner to modulate photosynthesis. Prevents excessive induction of non-photochemical quenching (NPQ) under continuous-light conditions. Indirectly promotes efficient inorganic carbon uptake into chloroplasts. The polypeptide is Potassium/proton antiporter CemA (Porphyra purpurea (Red seaweed)).